The sequence spans 1746 residues: tRNA (32-2'-O)-methyltransferase regulator THADA (1746 aa).

Residues 1252–1286 are a coiled coil; that stretch reads EQALAEIRRIVVELKALQLRLKNTEAANTKLNTNV.

Belongs to the THADA family. As to quaternary structure, interacts with SERCA. In terms of tissue distribution, detected in the larval fat body, salivary glands and wing imaginal disks (at protein level).

The protein resides in the endoplasmic reticulum. Together with methyltransferase Trm7-32, methylates the 2'-O-ribose of nucleotides at position 32 of the anticodon loop of substrate tRNAs. Plays a key role in energy homeostasis by regulating the balance between energy storage and heat production. Functions by negatively regulating Ca(2+) signaling pathways that are involved in heat production and maintaining correct lipid storage in the fat body. Regulates Ca(2+) signaling pathways by reducing the activity of the calcium-transporting ATPase SERCA possibly by promoting uncoupling of SERCA ATP hydrolysis from calcium pumping. May also function in the nervous system to control feeding behavior. This chain is tRNA (32-2'-O)-methyltransferase regulator THADA, found in Drosophila melanogaster (Fruit fly).